Reading from the N-terminus, the 193-residue chain is ATP synthase subunit b (193 aa).

The helical transmembrane segment at 35 to 55 (IPMMLATFIAFVIVFLLLFFF) threads the bilayer.

This sequence belongs to the ATPase B chain family. In terms of assembly, F-type ATPases have 2 components, F(1) - the catalytic core - and F(0) - the membrane proton channel. F(1) has five subunits: alpha(3), beta(3), gamma(1), delta(1), epsilon(1). F(0) has three main subunits: a(1), b(2) and c(10-14). The alpha and beta chains form an alternating ring which encloses part of the gamma chain. F(1) is attached to F(0) by a central stalk formed by the gamma and epsilon chains, while a peripheral stalk is formed by the delta and b chains.

The protein resides in the cell membrane. Functionally, f(1)F(0) ATP synthase produces ATP from ADP in the presence of a proton or sodium gradient. F-type ATPases consist of two structural domains, F(1) containing the extramembraneous catalytic core and F(0) containing the membrane proton channel, linked together by a central stalk and a peripheral stalk. During catalysis, ATP synthesis in the catalytic domain of F(1) is coupled via a rotary mechanism of the central stalk subunits to proton translocation. Component of the F(0) channel, it forms part of the peripheral stalk, linking F(1) to F(0). This chain is ATP synthase subunit b, found in Mycoplasmopsis synoviae (strain 53) (Mycoplasma synoviae).